A 467-amino-acid polypeptide reads, in one-letter code: MLATDSDPIVAIATASGRGGIGVVRISLGRAGEAAALALSDALCGARLTPRHASYVPFLDGAGEPLDRGIALYFPAPHSYTGEHVLELQGHGGPIVLQLVLQRCLDAGRAYGLRLAEPGEFTRRAFLNDKLDLAQAEAVADLIEASTEAAARSAGRSLDGAFSRDIHALVDDVIALRMLVEATLDFPEEEIDFLEAADARGKLAHIRERLAHVLGDARQGALLREGLSVVLAGQPNVGKSSLLNALAGAELAIVTPIAGTTRDKVAQTIQVEGIPLHIIDTAGLRETEDEVEKIGIARTWGEIERADVVLHLLDARSGLGPDDEAIAARFPAGVPVVRVLNKTDLTEAPASVARVGSGAERADLCEVRLSAKRGDGIDLLRGELLRIAGWQAGAESVYLARERHLIALRAAQAHVARAAEHADQNAQALDLFAEELRLAQEQLNSITGEFSSDDLLGVIFSRFCIGK.

R25, E87, and K130 together coordinate (6S)-5-formyl-5,6,7,8-tetrahydrofolate. In terms of domain architecture, TrmE-type G spans 226 to 389 (GLSVVLAGQP…LRGELLRIAG (164 aa)). N236 is a binding site for K(+). Residues 236-241 (NVGKSS), 255-261 (TPIAGTT), and 280-283 (DTAG) each bind GTP. A Mg(2+)-binding site is contributed by S240. K(+)-binding residues include T255, I257, and T260. T261 is a binding site for Mg(2+). Residue K467 coordinates (6S)-5-formyl-5,6,7,8-tetrahydrofolate.

The protein belongs to the TRAFAC class TrmE-Era-EngA-EngB-Septin-like GTPase superfamily. TrmE GTPase family. Homodimer. Heterotetramer of two MnmE and two MnmG subunits. K(+) is required as a cofactor.

It localises to the cytoplasm. Exhibits a very high intrinsic GTPase hydrolysis rate. Involved in the addition of a carboxymethylaminomethyl (cmnm) group at the wobble position (U34) of certain tRNAs, forming tRNA-cmnm(5)s(2)U34. This chain is tRNA modification GTPase MnmE, found in Burkholderia thailandensis (strain ATCC 700388 / DSM 13276 / CCUG 48851 / CIP 106301 / E264).